A 317-amino-acid chain; its full sequence is Small ribosomal subunit protein RACK1 (317 aa).

7 WD repeats span residues 15-55 (GHNG…DNQY), 64-103 (GHSH…TTQR), 106-146 (GHKG…ATLT), 148-188 (HNDW…VNAD), 191-230 (GHTG…TLYT), 232-272 (EAKA…DELK), and 281-317 (AKDP…TPSA).

This sequence belongs to the WD repeat G protein beta family. Ribosomal protein RACK1 subfamily. As to quaternary structure, component of the small ribosomal subunit. Mature ribosomes consist of a small (40S) and a large (60S) subunit. The 40S subunit contains about 32 different proteins and 1 molecule of RNA (18S). The 60S subunit contains 45 different proteins and 3 molecules of RNA (25S, 5.8S and 5S).

It is found in the cytoplasm. Component of the ribosome, a large ribonucleoprotein complex responsible for the synthesis of proteins in the cell. The small ribosomal subunit (SSU) binds messenger RNAs (mRNAs) and translates the encoded message by selecting cognate aminoacyl-transfer RNA (tRNA) molecules. The large subunit (LSU) contains the ribosomal catalytic site termed the peptidyl transferase center (PTC), which catalyzes the formation of peptide bonds, thereby polymerizing the amino acids delivered by tRNAs into a polypeptide chain. The nascent polypeptides leave the ribosome through a tunnel in the LSU and interact with protein factors that function in enzymatic processing, targeting, and the membrane insertion of nascent chains at the exit of the ribosomal tunnel. Located at the head of the 40S ribosomal subunit in the vicinity of the mRNA exit channel, it serves as a scaffold protein that can recruit other proteins to the ribosome. Involved in the negative regulation of translation of a specific subset of proteins. Plays a role in morphogenesis and pathogenesis. The sequence is that of Small ribosomal subunit protein RACK1 from Candida albicans (strain SC5314 / ATCC MYA-2876) (Yeast).